The sequence spans 417 residues: UDP-N-acetylglucosamine 1-carboxyvinyltransferase (417 aa).

23-24 lines the phosphoenolpyruvate pocket; sequence KN. A UDP-N-acetyl-alpha-D-glucosamine-binding site is contributed by R93. The active-site Proton donor is D117. Positions 305 and 327 each coordinate UDP-N-acetyl-alpha-D-glucosamine.

The protein belongs to the EPSP synthase family. MurA subfamily.

Its subcellular location is the cytoplasm. It catalyses the reaction phosphoenolpyruvate + UDP-N-acetyl-alpha-D-glucosamine = UDP-N-acetyl-3-O-(1-carboxyvinyl)-alpha-D-glucosamine + phosphate. The protein operates within cell wall biogenesis; peptidoglycan biosynthesis. In terms of biological role, cell wall formation. Adds enolpyruvyl to UDP-N-acetylglucosamine. This Mycolicibacterium paratuberculosis (strain ATCC BAA-968 / K-10) (Mycobacterium paratuberculosis) protein is UDP-N-acetylglucosamine 1-carboxyvinyltransferase.